The chain runs to 168 residues: Putative defense protein 1 (168 aa).

An N-terminal signal peptide occupies residues 1–18; that stretch reads MMFAYIVAVVSALALTSA. The Reelin domain maps to 19-168; the sequence is FPTGAPRSAC…SAPVKILSHH (150 aa). A disulfide bond links Cys28 and Cys105.

The protein belongs to the insect defense protein family. Very highly expressed in midgut, and highly expressed in fat body, silk gland and epidermis.

It localises to the secreted. Its function is as follows. As this protein is expressed upon bacterial infection, it may have antimicrobial activity. In Antheraea mylitta (Tasar silkworm), this protein is Putative defense protein 1.